Consider the following 158-residue polypeptide: NADPH-dependent 7-cyano-7-deazaguanine reductase (158 aa).

C56 serves as the catalytic Thioimide intermediate. D63 serves as the catalytic Proton donor. Substrate-binding positions include 78-80 (LES) and 97-98 (HE).

It belongs to the GTP cyclohydrolase I family. QueF type 1 subfamily.

It is found in the cytoplasm. The enzyme catalyses 7-aminomethyl-7-carbaguanine + 2 NADP(+) = 7-cyano-7-deazaguanine + 2 NADPH + 3 H(+). The protein operates within tRNA modification; tRNA-queuosine biosynthesis. Its function is as follows. Catalyzes the NADPH-dependent reduction of 7-cyano-7-deazaguanine (preQ0) to 7-aminomethyl-7-deazaguanine (preQ1). The chain is NADPH-dependent 7-cyano-7-deazaguanine reductase from Rhodopseudomonas palustris (strain TIE-1).